We begin with the raw amino-acid sequence, 226 residues long: 2-amino-5-formylamino-6-ribosylaminopyrimidin-4(3H)-one 5'-monophosphate deformylase (226 aa).

Residues E29, H31, D40, and H108 each contribute to the Fe cation site.

Belongs to the creatininase superfamily. FAPy deformylase family. In terms of assembly, homodimer. The cofactor is Fe(2+). Zn(2+) is required as a cofactor.

The catalysed reaction is 2-amino-5-formylamino-6-(5-phospho-D-ribosylamino)pyrimidin-4(3H)-one + H2O = 2,5-diamino-6-(1-D-ribosylamino)pyrimidin-4(3H)-one 5'-phosphate + formate + H(+). Its pathway is cofactor biosynthesis; coenzyme F420 biosynthesis. It participates in cofactor biosynthesis; riboflavin biosynthesis. Functionally, catalyzes the hydrolysis of the formamide of 2-amino-5-formylamino-6-ribosylamino-4(3H)-pyrimidinone 5'-monophosphate (FAPy) to form 2,5-diamino-6-ribosylamino-4(3H)-pyrimidinone 5'-phosphate (APy). This is 2-amino-5-formylamino-6-ribosylaminopyrimidin-4(3H)-one 5'-monophosphate deformylase from Methanocaldococcus vulcanius (strain ATCC 700851 / DSM 12094 / M7) (Methanococcus vulcanius).